We begin with the raw amino-acid sequence, 274 residues long: Putative ABC transporter ATP-binding protein MM_1037 (274 aa).

The region spanning 2–235 is the ABC transporter domain; the sequence is IRLENVSYCY…PSLKDLGLTP (234 aa). Residue 35 to 42 coordinates ATP; the sequence is GRNGSGKS.

This sequence belongs to the ABC transporter superfamily.

The protein resides in the cell membrane. In terms of biological role, probably part of an ABC transporter complex. Responsible for energy coupling to the transport system. The sequence is that of Putative ABC transporter ATP-binding protein MM_1037 from Methanosarcina mazei (strain ATCC BAA-159 / DSM 3647 / Goe1 / Go1 / JCM 11833 / OCM 88) (Methanosarcina frisia).